The chain runs to 590 residues: Selenoprotein N (590 aa).

Residues 1–26 (MGRARPGQRGPPSPGPAAQPPAPPRR) form a disordered region. Positions 1-43 (MGRARPGQRGPPSPGPAAQPPAPPRRRARSLALLGALLAAAAA) are cleaved as a signal peptide. The segment covering 9 to 23 (RGPPSPGPAAQPPAP) has biased composition (pro residues). An EF-hand domain is found at 67 to 102 (TLGTDGLFLFSSLDTDGDMYISPEEFKPIAEKLTGS). N-linked (GlcNAc...) asparagine glycosylation is present at Asn126. Sec127 is a non-standard amino acid (selenocysteine). N-linked (GlcNAc...) asparagine glycosylation occurs at Asn190. Residue Sec462 is a non-standard amino acid, selenocysteine. N-linked (GlcNAc...) asparagine glycans are attached at residues Asn483, Asn505, and Asn531.

As to quaternary structure, interacts with RYR1, RYR2 and RYR3. N-glycosylated. In terms of tissue distribution, isoform 1 and isoform 2 are expressed in skeletal muscle, brain, lung and placenta. Isoform 2 is also expressed in heart, diaphragm and stomach.

The protein localises to the endoplasmic reticulum membrane. In terms of biological role, plays an important role in cell protection against oxidative stress and in the regulation of redox-related calcium homeostasis. Regulates the calcium level of the ER by protecting the calcium pump ATP2A2 against the oxidoreductase ERO1A-mediated oxidative damage. Within the ER, ERO1A activity increases the concentration of H(2)O(2), which attacks the luminal thiols in ATP2A2 and thus leads to cysteinyl sulfenic acid formation (-SOH) and SEPN1 reduces the SOH back to free thiol (-SH), thus restoring ATP2A2 activity. Acts as a modulator of ryanodine receptor (RyR) activity: protects RyR from oxidation due to increased oxidative stress, or directly controls the RyR redox state, regulating the RyR-mediated calcium mobilization required for normal muscle development and differentiation. Its function is as follows. Essential for muscle regeneration and satellite cell maintenance in skeletal muscle. The polypeptide is Selenoprotein N (Homo sapiens (Human)).